A 498-amino-acid polypeptide reads, in one-letter code: Phosphoethanolamine N-methyltransferase 1 (498 aa).

Positions 68, 73, 89, 115, 116, and 134 each coordinate S-adenosyl-L-homocysteine. S167, S172, G173, R177, and Y184 together coordinate phosphocholine. N-methylethanolamine phosphate-binding positions include 253 to 254 (QY) and Y262. Y262 provides a ligand contact to phosphocholine. 7 residues coordinate S-adenosyl-L-homocysteine: V271, S272, G298, D320, D346, C347, and R363. The phosphocholine site is built by Y394, Y408, R412, Y414, and K480. Residues Y394, Y408, 412–414 (RGY), and K480 each bind N-methylethanolamine phosphate.

Belongs to the class I-like SAM-binding methyltransferase superfamily. PEAMT family.

The catalysed reaction is phosphoethanolamine + S-adenosyl-L-methionine = N-methylethanolamine phosphate + S-adenosyl-L-homocysteine + H(+). It carries out the reaction N-methylethanolamine phosphate + S-adenosyl-L-methionine = N,N-dimethylethanolamine phosphate + S-adenosyl-L-homocysteine + H(+). The enzyme catalyses N,N-dimethylethanolamine phosphate + S-adenosyl-L-methionine = phosphocholine + S-adenosyl-L-homocysteine + H(+). It participates in phospholipid metabolism; phosphatidylcholine biosynthesis; phosphocholine from phosphoethanolamine: step 1/1. With respect to regulation, inhibited by phosphatidic acid. Functionally, involved in phosphocholine biosynthesis. Catalyzes the N-methylation of phosphoethanolamine, phosphomonomethylethanolamine and phosphodimethylethanolamine, the three methylation steps required to convert phosphoethanolamine to phosphocholine (PC). The sequence is that of Phosphoethanolamine N-methyltransferase 1 from Triticum aestivum (Wheat).